The following is a 229-amino-acid chain: Transmembrane emp24 domain-containing protein 5 (229 aa).

A signal peptide spans 1–27 (MGGRMWLPFPVLLLSALPAALLRGAAG). At 28–196 (FTPSLDSDFT…IQESNFDRVN (169 aa)) the chain is on the lumenal side. One can recognise a GOLD domain in the interval 45 to 126 (KECFYQPMPL…EKVIFFELIL (82 aa)). Residues 197-217 (FWSVVNLMVMVVVSAIQVYTL) traverse the membrane as a helical segment. The Cytoplasmic portion of the chain corresponds to 218–229 (KSLFEDKRKSRT).

Belongs to the EMP24/GP25L family. In terms of assembly, interacts with TMED9 and TMED10.

The protein localises to the endoplasmic reticulum membrane. It localises to the golgi apparatus. Its subcellular location is the cis-Golgi network membrane. The protein resides in the endoplasmic reticulum-Golgi intermediate compartment membrane. Its function is as follows. Potential role in vesicular protein trafficking, mainly in the early secretory pathway. Required for the maintenance of the Golgi apparatus; involved in protein exchange between Golgi stacks during assembly. Probably not required for COPI-vesicle-mediated retrograde transport. This Mus musculus (Mouse) protein is Transmembrane emp24 domain-containing protein 5 (Tmed5).